A 376-amino-acid polypeptide reads, in one-letter code: MSATLELAKRLIACASITPRDAGCQGLLAQRLLALGFQGEQMNFGEVDNIWLRRGQKPPLFVFAGHTDVVPPGPPDKWLTDPFTPEVRNGLLYGRGAADMKGSLAAMVTACEHFINVHSDHAGSIAFLLTSDEEGPAINGTIKVVETLQARGEKIDYCLVGEPTSQKQVGDMIKNGRRGSLGGRLIVRGIQGHVAYPHLADNPIHSLAPALAVLCAQTWDQGNKDFPPTTFQISNIQGGTGATNVIPGEVEILFNFRYSTEVTHQQLQQQMEEILSQQRLNYELEWTLSGKPFLTAPGSLMTAVSQAVRGITGIDAEFSTTGGTSDGRFIAPTGAQVVELGPVNATIHKVNECVAVADLEILSRIYSRILEILLTE.

H66 serves as a coordination point for Zn(2+). Residue D68 is part of the active site. Residue D99 participates in Zn(2+) binding. The active-site Proton acceptor is E133. Zn(2+)-binding residues include E134, E162, and H348.

Belongs to the peptidase M20A family. DapE subfamily. As to quaternary structure, homodimer. The cofactor is Zn(2+). Requires Co(2+) as cofactor.

It catalyses the reaction N-succinyl-(2S,6S)-2,6-diaminopimelate + H2O = (2S,6S)-2,6-diaminopimelate + succinate. The protein operates within amino-acid biosynthesis; L-lysine biosynthesis via DAP pathway; LL-2,6-diaminopimelate from (S)-tetrahydrodipicolinate (succinylase route): step 3/3. Its function is as follows. Catalyzes the hydrolysis of N-succinyl-L,L-diaminopimelic acid (SDAP), forming succinate and LL-2,6-diaminopimelate (DAP), an intermediate involved in the bacterial biosynthesis of lysine and meso-diaminopimelic acid, an essential component of bacterial cell walls. This chain is Succinyl-diaminopimelate desuccinylase, found in Nitrosococcus oceani (strain ATCC 19707 / BCRC 17464 / JCM 30415 / NCIMB 11848 / C-107).